The sequence spans 177 residues: Large ribosomal subunit protein uL6 (177 aa).

Belongs to the universal ribosomal protein uL6 family. Part of the 50S ribosomal subunit.

Its function is as follows. This protein binds to the 23S rRNA, and is important in its secondary structure. It is located near the subunit interface in the base of the L7/L12 stalk, and near the tRNA binding site of the peptidyltransferase center. In Brucella canis (strain ATCC 23365 / NCTC 10854 / RM-666), this protein is Large ribosomal subunit protein uL6.